The following is a 536-amino-acid chain: Keratin, type II cytoskeletal 4 (536 aa).

Residues 1-145 are head; sequence MISRQSSVRG…DPEIQKIRTA (145 aa). At Arg-13 the chain carries Omega-N-methylarginine. The segment at 146 to 181 is coil 1A; it reads EREQIKTLNNKFASFIDKVRFLEQQNKVLETKWNLL. The IF rod domain occupies 146–457; sequence EREQIKTLNN…KLLEGEECRM (312 aa). The linker 1 stretch occupies residues 182–200; sequence QQQTTTTSPRNLDPFFETY. Residues 201–293 are coil 1B; that stretch reads INALRKNLDT…LYEAELSQMQ (93 aa). Positions 294-316 are linker 12; the sequence is THVSDTSVVLSMDNNRNLDLDGI. The tract at residues 317-454 is coil 2; sequence IAEVRAQYEE…TYRKLLEGEE (138 aa). The tract at residues 455–524 is tail; sequence CRMSGECKSA…TSSATITKRS (70 aa). The tract at residues 515–536 is disordered; the sequence is TSSATITKRSPRTRQDPDGLQP. The span at 527–536 shows a compositional bias: basic and acidic residues; it reads TRQDPDGLQP.

Belongs to the intermediate filament family. Heterotetramer of two type I and two type II keratins. keratin-4 is generally associated with keratin-13.

This Rattus norvegicus (Rat) protein is Keratin, type II cytoskeletal 4.